The primary structure comprises 180 residues: Large ribosomal subunit protein uL15 (180 aa).

The interval 1–62 (MKKERLEQAS…KTAGRGSKGQ (62 aa)) is disordered.

It belongs to the universal ribosomal protein uL15 family. Part of the 50S ribosomal subunit.

Functionally, binds to the 23S rRNA. The sequence is that of Large ribosomal subunit protein uL15 from Leptospira interrogans serogroup Icterohaemorrhagiae serovar copenhageni (strain Fiocruz L1-130).